The chain runs to 504 residues: Maturase K (504 aa).

This sequence belongs to the intron maturase 2 family. MatK subfamily.

It localises to the plastid. It is found in the chloroplast. Functionally, usually encoded in the trnK tRNA gene intron. Probably assists in splicing its own and other chloroplast group II introns. The protein is Maturase K of Cardamine amara (Large bitter-cress).